The sequence spans 538 residues: Phosphoenolpyruvate carboxykinase (ATP) (538 aa).

Substrate contacts are provided by R64, Y205, and K211. Residues K211, H230, and 246–254 contribute to the ATP site; that span reads GLSGTGKTT. Residues K211 and H230 each coordinate Mn(2+). Mn(2+) is bound at residue D267. ATP is bound by residues E295, R331, 447–448, and T453; that span reads RI. R331 is a substrate binding site.

This sequence belongs to the phosphoenolpyruvate carboxykinase (ATP) family. In terms of assembly, monomer. It depends on Mn(2+) as a cofactor.

The protein localises to the cytoplasm. The enzyme catalyses oxaloacetate + ATP = phosphoenolpyruvate + ADP + CO2. The protein operates within carbohydrate biosynthesis; gluconeogenesis. Involved in the gluconeogenesis. Catalyzes the conversion of oxaloacetate (OAA) to phosphoenolpyruvate (PEP) through direct phosphoryl transfer between the nucleoside triphosphate and OAA. The protein is Phosphoenolpyruvate carboxykinase (ATP) of Pasteurella multocida (strain Pm70).